A 180-amino-acid chain; its full sequence is Large ribosomal subunit protein uL5 (180 aa).

This sequence belongs to the universal ribosomal protein uL5 family. As to quaternary structure, part of the 50S ribosomal subunit; part of the 5S rRNA/L5/L18/L25 subcomplex. Contacts the 5S rRNA and the P site tRNA. Forms a bridge to the 30S subunit in the 70S ribosome.

This is one of the proteins that bind and probably mediate the attachment of the 5S RNA into the large ribosomal subunit, where it forms part of the central protuberance. In the 70S ribosome it contacts protein S13 of the 30S subunit (bridge B1b), connecting the 2 subunits; this bridge is implicated in subunit movement. Contacts the P site tRNA; the 5S rRNA and some of its associated proteins might help stabilize positioning of ribosome-bound tRNAs. The protein is Large ribosomal subunit protein uL5 of Solibacter usitatus (strain Ellin6076).